We begin with the raw amino-acid sequence, 210 residues long: N-(5'-phosphoribosyl)anthranilate isomerase (210 aa).

This sequence belongs to the TrpF family.

It carries out the reaction N-(5-phospho-beta-D-ribosyl)anthranilate = 1-(2-carboxyphenylamino)-1-deoxy-D-ribulose 5-phosphate. The protein operates within amino-acid biosynthesis; L-tryptophan biosynthesis; L-tryptophan from chorismate: step 3/5. The protein is N-(5'-phosphoribosyl)anthranilate isomerase of Staphylococcus aureus (strain Mu3 / ATCC 700698).